A 687-amino-acid chain; its full sequence is Adhesion G-protein coupled receptor G1 (687 aa).

The first 25 residues, 1–25 (MTAQSLLQTTLFLLSLLFLVQGAHG), serve as a signal peptide directing secretion. 26–33 (RGHREDFR) is a heparin binding site. The Extracellular segment spans residues 26 to 402 (RGHREDFRFC…VEVDAVHKHY (377 aa)). 2 cysteine pairs are disulfide-bonded: Cys35-Cys91 and Cys121-Cys177. 4 N-linked (GlcNAc...) asparagine glycosylation sites follow: Asn39, Asn148, Asn156, and Asn171. Position 190–200 (190–200 (LKHPQKASRRP)) interacts with heparin. Residues 224 to 395 (DTVSFEEDRV…AVLMVSSVEV (172 aa)) form the GAIN-B domain. Asn234, Asn303, Asn324, and Asn341 each carry an N-linked (GlcNAc...) asparagine glycan. 2 disulfides stabilise this stretch: Cys346–Cys377 and Cys366–Cys379. Residues 346-395 (CVFWVEDPTLSNPGRWSSAGCETVRRETQTSCFCNHLTYFAVLMVSSVEV) form a GPS region. Residues 384-397 (YFAVLMVSSVEVDA) form a stachel region. Residues 403-423 (LSLLSYVGCVVSALACVVTIA) traverse the membrane as a helical segment. Residues 424 to 442 (AYLCSRRKPRDYTIKVHMN) are Cytoplasmic-facing. A helical transmembrane segment spans residues 443 to 463 (LLLAVFLLDVSFLLSEPVALT). At 464-470 (GSQSGCR) the chain is on the extracellular side. Residues 471-491 (ASAIFLHFSLLACLSWMGLEG) form a helical membrane-spanning segment. Topologically, residues 492–512 (YNLYRLVVEVFGTYIPGYLLK) are cytoplasmic. Residues 513-533 (LSAMGWGFPIFLVTLVALVDV) traverse the membrane as a helical segment. Residues 534-570 (DNYGPIILAVHRTPESVIYPSMCWIRDSLVSYITNLG) are Extracellular-facing. A helical transmembrane segment spans residues 571-591 (LFSLVFLFNMAMLGTMVVQIL). At 592 to 603 (RLRPHTQKWSHV) the chain is on the cytoplasmic side. Residues 604–624 (LTLLGLSLVLGLPWALIFFSF) traverse the membrane as a helical segment. At 625–630 (ASGTFQ) the chain is on the extracellular side. A helical transmembrane segment spans residues 631–651 (LVVLYLFSIITSFQGFLIFLW). Topologically, residues 652–687 (YWSMRLQARGGPSPLKSNSDSARLPISTGSTSSSRI) are cytoplasmic. The tract at residues 664 to 687 (SPLKSNSDSARLPISTGSTSSSRI) is disordered. Residues 666–687 (LKSNSDSARLPISTGSTSSSRI) show a composition bias toward polar residues.

It belongs to the G-protein coupled receptor 2 family. LN-TM7 subfamily. Heterodimer of 2 chains generated by proteolytic processing; the large extracellular N-terminal fragment (ADGRG1 NT) and the membrane-bound C-terminal fragment (ADGRG1-CT) predominantly remain associated and non-covalently linked. ADGRG1 NT self-associates in a trans-trans manner; the homophilic interaction enhances receptor signaling. Interacts with TGM2. Interacts with heparin; leading to the reduction of ADGRG1 shedding. Interacts with COL3A1. Part of a GPCR-tetraspanin complex at least consisting of ADGRG1, CD81, eventually CD9, and GNA11 in which CD81 is enhancing the association of ADGRG1 with GNA11. In terms of processing, autoproteolytically cleaved into 2 fragments; the large extracellular N-terminal fragment (ADGRG1 NT) and the membrane-bound C-terminal fragment (ADGRG1 CT) predominantly remain associated and non-covalently linked. Shedding to yield the secreted ADGRG1 N-terminal fragment seems to involve metalloprotease(s). Ubiquitinated. Undergoes polyubiquitination upon activation.

Its subcellular location is the cell membrane. It localises to the secreted. It is found in the membrane raft. Its activity is regulated as follows. Forms a heterodimer of 2 chains generated by proteolytic processing that remain associated through non-covalent interactions mediated by the GAIN-B domain. In the inactivated receptor, the Stachel sequence (also named stalk) is embedded in the GAIN-B domain, where it adopts a beta-strand conformation. On activation, the Stachel moves into the 7 transmembrane region and adopts a twisted hook-shaped configuration that forms contacts within the receptor, leading to coupling of a G-alpha protein, which activates signaling. The cleaved GAIN-B and N-terminal domains can then dissociate from the rest of the receptor. In terms of biological role, adhesion G-protein coupled receptor (aGPCR) for steroid hormone 17alpha-hydroxypregnenolone (17-OH), which is involved in cell adhesion and cell-cell interactions. Ligand binding causes a conformation change that triggers signaling via guanine nucleotide-binding proteins (G proteins) and modulates the activity of downstream effectors, such as RhoA pathway. ADGRG1 is coupled to G(12) and/or G(13) G proteins (GNA12 and GNA13, respectively) and mediates the activation Rho small GTPases. Acts as a potent suppressor of ferroptosis: binding to 17-OH-binding initiates signaling that down-regulates CD36 and alleviates ferroptosis-induced liver injury. Ligand-binding also induces cell adhesion activity via association with proteins such as collagen III/COL3A1 and TGM2. Mediates cell matrix adhesion in developing neurons and hematopoietic stem cells. Involved in cortical development, specifically in maintenance of the pial basement membrane integrity and in cortical lamination: association with COL3A1 in the developing brain inhibits neuronal migration via activation of the RhoA pathway. Together with TGM2, acts as a regulator of myelination and myelin repair in oligodendrocyte precursor cells. Acts as a hemostatic sensor of shear force: G protein-coupled receptor signaling is activated in response to shear force in platelets, promoting G(13) G protein signaling, and platelet shape change and aggregation in a COL3A1-dependent manner. Acts as an inhibitor of VEGFA production thereby inhibiting angiogenesis through a signaling pathway mediated by PRKCA. Plays a role in the maintenance of hematopoietic stem cells in bone marrow niche. Plays an essential role in testis development. The polypeptide is Adhesion G-protein coupled receptor G1 (ADGRG1) (Macaca mulatta (Rhesus macaque)).